Consider the following 236-residue polypeptide: 2-C-methyl-D-erythritol 4-phosphate cytidylyltransferase (236 aa).

Belongs to the IspD/TarI cytidylyltransferase family. IspD subfamily. Homodimer.

The enzyme catalyses 2-C-methyl-D-erythritol 4-phosphate + CTP + H(+) = 4-CDP-2-C-methyl-D-erythritol + diphosphate. It functions in the pathway isoprenoid biosynthesis; isopentenyl diphosphate biosynthesis via DXP pathway; isopentenyl diphosphate from 1-deoxy-D-xylulose 5-phosphate: step 2/6. Catalyzes the formation of 4-diphosphocytidyl-2-C-methyl-D-erythritol from CTP and 2-C-methyl-D-erythritol 4-phosphate (MEP). The sequence is that of 2-C-methyl-D-erythritol 4-phosphate cytidylyltransferase from Salmonella newport (strain SL254).